Reading from the N-terminus, the 361-residue chain is Chorismate synthase (361 aa).

2 residues coordinate NADP(+): arginine 48 and arginine 54. FMN is bound by residues arginine 125–serine 127, asparagine 238–alanine 239, glycine 278, lysine 293–serine 297, and arginine 319.

It belongs to the chorismate synthase family. In terms of assembly, homotetramer. FMNH2 is required as a cofactor.

It catalyses the reaction 5-O-(1-carboxyvinyl)-3-phosphoshikimate = chorismate + phosphate. Its pathway is metabolic intermediate biosynthesis; chorismate biosynthesis; chorismate from D-erythrose 4-phosphate and phosphoenolpyruvate: step 7/7. In terms of biological role, catalyzes the anti-1,4-elimination of the C-3 phosphate and the C-6 proR hydrogen from 5-enolpyruvylshikimate-3-phosphate (EPSP) to yield chorismate, which is the branch point compound that serves as the starting substrate for the three terminal pathways of aromatic amino acid biosynthesis. This reaction introduces a second double bond into the aromatic ring system. The sequence is that of Chorismate synthase from Yersinia enterocolitica serotype O:8 / biotype 1B (strain NCTC 13174 / 8081).